The primary structure comprises 687 residues: Leucine-rich repeat and fibronectin type III domain-containing protein 1-like protein (687 aa).

An N-terminal signal peptide occupies residues 1 to 17 (MEWLIFSLLLLAVSASG). Positions 18-51 (QLCPKRCMCQNLSPSLAILCAKTGLLFVPTVIDR) constitute an LRRNT domain. Residues 18 to 527 (QLCPKRCMCQ…LRSHFLGGTM (510 aa)) lie on the Extracellular side of the membrane. 7 LRR repeats span residues 52–73 (RTVE…DFAN), 76–97 (SLLH…TFAD), 100–121 (RLRA…HFRG), 124–145 (NLRH…AFDD), 149–170 (TLED…TIGR), 173–194 (NVNT…IFSN), and 197–218 (KLAR…PLFL). Asn-73 carries N-linked (GlcNAc...) asparagine glycosylation. The 47-residue stretch at 241-287 (NPLHCNCELLWLRRLTREDDLETCASPPDLTAKYFWTIPEEEFICDP) folds into the LRRCT domain. Residues 287 to 376 (PPVITRKSPK…STGTVELVVS (90 aa)) enclose the Ig-like domain. A disulfide bridge links Cys-309 with Cys-358. 6 N-linked (GlcNAc...) asparagine glycosylation sites follow: Asn-331, Asn-340, Asn-346, Asn-383, Asn-410, and Asn-450. The interval 384-412 (STNRIREPDPGPSDILTSAKSTSSVSNET) is disordered. Residues 398 to 412 (ILTSAKSTSSVSNET) show a composition bias toward polar residues. The Fibronectin type-III domain occupies 415 to 510 (QERKVVLAEL…VGCVTFVTET (96 aa)). The helical transmembrane segment at 528-548 (IIIIGGIIVASVLVFIIILMI) threads the bilayer. The Cytoplasmic portion of the chain corresponds to 549-687 (RYKVYSQHGA…AQRDWSDFKI (139 aa)). Disordered stretches follow at residues 563–601 (GTAM…GSLG) and 630–687 (EDIV…DFKI). Polar residues-rich tracts occupy residues 565-576 (AMTNVRSQTNGG) and 657-672 (EGTS…SPQV). Positions 673-687 (SDEKKAQRDWSDFKI) are enriched in basic and acidic residues.

Belongs to the LRFN family.

It is found in the membrane. The protein resides in the synapse. Functionally, may be involved in the regulation of excitatory synapses. The polypeptide is Leucine-rich repeat and fibronectin type III domain-containing protein 1-like protein (lrfn1l) (Danio rerio (Zebrafish)).